The primary structure comprises 375 residues: Trichodiene synthase (375 aa).

This sequence belongs to the trichodiene synthase family.

It catalyses the reaction (2E,6E)-farnesyl diphosphate = trichodiene + diphosphate. It functions in the pathway sesquiterpene biosynthesis; trichothecene biosynthesis. Its function is as follows. TS is a member of the terpene cyclase group of enzymes. It catalyzes the isomerization and cyclization of farnesyl pyro-phosphate to form trichodiene, the first cyclic intermediate in the biosynthetic pathway for trichothecenes. It serves to branch trichothecene biosynthesis from the isoprenoid pathway. This is Trichodiene synthase (TRI5) from Fusarium pseudograminearum (Wheat and barley crown-rot fungus).